The following is a 58-amino-acid chain: Large ribosomal subunit protein uL30 (58 aa).

It belongs to the universal ribosomal protein uL30 family. In terms of assembly, part of the 50S ribosomal subunit.

The sequence is that of Large ribosomal subunit protein uL30 from Bacteroides thetaiotaomicron (strain ATCC 29148 / DSM 2079 / JCM 5827 / CCUG 10774 / NCTC 10582 / VPI-5482 / E50).